The primary structure comprises 162 residues: Photosystem II extrinsic protein V (162 aa).

The N-terminal stretch at 1–26 is a signal peptide; the sequence is MLKRYMLLAVATVFFAFQVLTSTATA. Residues Cys-62, Cys-65, His-66, and His-117 each contribute to the heme c site.

This sequence belongs to the cytochrome c family. PsbV subfamily. PSII is composed of 1 copy each of membrane proteins PsbA, PsbB, PsbC, PsbD, PsbE, PsbF, PsbH, PsbI, PsbJ, PsbK, PsbL, PsbM, PsbT, PsbX, PsbY, PsbZ, Psb30/Ycf12, peripheral proteins PsbO, CyanoQ (PsbQ), PsbU, PsbV and a large number of cofactors. It forms dimeric complexes. Heme c is required as a cofactor.

It is found in the cellular thylakoid membrane. One of the extrinsic, lumenal subunits of photosystem II (PSII). PSII is a light-driven water plastoquinone oxidoreductase, using light energy to abstract electrons from H(2)O, generating a proton gradient subsequently used for ATP formation. The extrinsic proteins stabilize the structure of photosystem II oxygen-evolving complex (OEC), the ion environment of oxygen evolution and protect the OEC against heat-induced inactivation. Low-potential cytochrome c that plays a role in the OEC of PSII. In Acaryochloris marina (strain MBIC 11017), this protein is Photosystem II extrinsic protein V.